Here is a 902-residue protein sequence, read N- to C-terminus: Mitochondrial aspartate-glutamate transporter AGC1 (902 aa).

Solcar repeat units follow at residues Phe-528–Arg-614, Leu-622–Asp-710, and Leu-725–Phe-813. The next 6 membrane-spanning stretches (helical) occupy residues Phe-534–Ile-554, Gly-591–Met-611, Leu-622–Thr-642, Gly-681–Pro-702, Leu-731–Ile-751, and Phe-786–Ala-806.

It belongs to the mitochondrial carrier (TC 2.A.29) family.

The protein resides in the mitochondrion inner membrane. Calcium-dependent mitochondrial aspartate and glutamate carrier. Transport of glutamate in mitochondria is required for mitochondrial transamination reactions and ornithine synthesis. Plays also a role in malate-aspartate NADH shuttle, which is critical for growth on acetate and fatty acids. This chain is Mitochondrial aspartate-glutamate transporter AGC1 (AGC1), found in Saccharomyces cerevisiae (strain ATCC 204508 / S288c) (Baker's yeast).